The sequence spans 221 residues: NEDD8 ultimate buster 1 (221 aa).

UBA domains are found at residues Leu1–Asn19, Glu30–Asn76, and Ser95–Asn135. Residues Gly136 to Leu193 form a disordered region. Residues Ser146–Ser168 show a composition bias toward low complexity. Acidic residues predominate over residues Thr169–Leu193.

Directly interacts with NEDD8 and PSMD4/S5a, a member of the regulatory subunit of the 26S proteasome. Interacts with AIPL1.

The protein resides in the nucleus. In terms of biological role, specific down-regulator of the NEDD8 conjugation system. Recruits NEDD8 and its conjugates to the proteasome for degradation. This Bos taurus (Bovine) protein is NEDD8 ultimate buster 1 (NUB1).